The primary structure comprises 366 residues: Probable methyltransferase-like protein 24 (366 aa).

The signal sequence occupies residues 1-29; that stretch reads MARERPPGRGCGVLRRCLLGAVLLFGLRL. A disordered region spans residues 36 to 110; the sequence is AGPGSPTRSA…GRPRRKGPRW (75 aa). Residues 44–63 show a composition bias toward pro residues; the sequence is SAPPGPAWRPPGPHLPPAPG. Residues 91–100 show a composition bias toward low complexity; sequence TPEPGCCAPR.

Belongs to the methyltransferase superfamily.

The protein resides in the secreted. Functionally, probable methyltransferase. The sequence is that of Probable methyltransferase-like protein 24 (METTL24) from Homo sapiens (Human).